The sequence spans 347 residues: MTNESRKRKVRGSQIRSSRGDKKQGRSQSRDDKEIERLERQNDARGQESSTHVDEGFVPEEQSFIETESVNRVESRMERWLDVGRPVHLIGPTGCGKTSLAMHVARERDRPVVWINGDAELTTSDLVGEYAEKERISEHDQFIHNVVKSKDIIRDRWVDNPLTLAVQEGATLVYNEFSRTKPVANNVLLSVFEEGVLELPGKRGKSRYVDVHPEFRTILTSNSVEYAGVHEPQDALLDRLIGIYMDFYDLDTEIEIVRAHVDKSADTNVEDIVRVLRELRERLDITVGTRAAIMANEGATTVDTVDQAVLTDICTDVLASKVAQRSDVRGLREEIESAIDDMEVALS.

The segment covering 1-11 has biased composition (basic residues); it reads MTNESRKRKVR. The disordered stretch occupies residues 1–64; the sequence is MTNESRKRKV…EGFVPEEQSF (64 aa). The span at 18 to 55 shows a compositional bias: basic and acidic residues; that stretch reads SRGDKKQGRSQSRDDKEIERLERQNDARGQESSTHVDE. 91 to 98 contacts ATP; the sequence is GPTGCGKT.

Belongs to the CbbQ/NirQ/NorQ/GpvN family. Forms homodimers, forms a GvpN1-GvpO1 heterodimer, interacts with GvpC1 (via the latter's C-terminus) and GvpL, might interact with GvpA1.

It is found in the gas vesicle. The protein localises to the cytoplasm. It carries out the reaction ATP + H2O = ADP + phosphate + H(+). In terms of biological role, an ATPase that functions in gas vesicle formation. A minor component of the gas vesicle, also found in soluble extracts. Probably enhances gas vesicle formation. Gas vesicles are hollow, gas filled proteinaceous nanostructures found in several microbial planktonic microorganisms. They allow positioning of halobacteria at the optimal depth for growth in the poorly aerated, shallow brine pools of their habitat. Expression of a 9.5 kb p-vac DNA fragment containing 2 divergently transcribed regions (gvpD-gvpE-gvpF-gvpG-gvpH-gvpI-gvpJ-gvpK-gvpL-gvpM and gvpA-gvpC-gvpN-gvpO) allows H.volcanii to produce gas vesicles. A similar region restores gas vesicle production in H.halobium without the p-vac locus, but which still have the c-vac locus. This Halobacterium salinarum (strain ATCC 700922 / JCM 11081 / NRC-1) (Halobacterium halobium) protein is Gas vesicle ATPase GvpN1 (gvpN11).